The following is a 128-amino-acid chain: Small ribosomal subunit protein uS13 (128 aa).

The segment at 97-128 is disordered; it reads PVRGQRTRSNARTRKGPRPSRIKTKKKKEQTV. Residues 101–128 are compositionally biased toward basic residues; sequence QRTRSNARTRKGPRPSRIKTKKKKEQTV.

It belongs to the universal ribosomal protein uS13 family. Part of the 30S ribosomal subunit. Forms a loose heterodimer with protein S19. Forms two bridges to the 50S subunit in the 70S ribosome.

Functionally, located at the top of the head of the 30S subunit, it contacts several helices of the 16S rRNA. In the 70S ribosome it contacts the 23S rRNA (bridge B1a) and protein L5 of the 50S subunit (bridge B1b), connecting the 2 subunits; these bridges are implicated in subunit movement. Contacts the tRNAs in the A and P-sites. The sequence is that of Small ribosomal subunit protein uS13 from Pseudothermotoga lettingae (strain ATCC BAA-301 / DSM 14385 / NBRC 107922 / TMO) (Thermotoga lettingae).